The primary structure comprises 246 residues: NAD-dependent protein deacylase (246 aa).

In terms of domain architecture, Deacetylase sirtuin-type spans 1–245; sequence MKEFITKHRD…ELIREILDNP (245 aa). 20-39 serves as a coordination point for NAD(+); it reads GAGISAESGIPTFRGSEGLW. The substrate site is built by tyrosine 64 and arginine 67. Residue 98-101 participates in NAD(+) binding; it reads QNVD. The active-site Proton acceptor is the histidine 116. The Zn(2+) site is built by cysteine 124, cysteine 127, cysteine 146, and cysteine 149. Residues 186 to 188, 212 to 214, and threonine 230 contribute to the NAD(+) site; these read GTS and NPE.

The protein belongs to the sirtuin family. Class III subfamily. Requires Zn(2+) as cofactor.

Its subcellular location is the cytoplasm. It catalyses the reaction N(6)-acetyl-L-lysyl-[protein] + NAD(+) + H2O = 2''-O-acetyl-ADP-D-ribose + nicotinamide + L-lysyl-[protein]. It carries out the reaction N(6)-succinyl-L-lysyl-[protein] + NAD(+) + H2O = 2''-O-succinyl-ADP-D-ribose + nicotinamide + L-lysyl-[protein]. Its function is as follows. NAD-dependent lysine deacetylase and desuccinylase that specifically removes acetyl and succinyl groups on target proteins. Modulates the activities of several proteins which are inactive in their acylated form. This is NAD-dependent protein deacylase from Leptospira interrogans serogroup Icterohaemorrhagiae serovar Lai (strain 56601).